Reading from the N-terminus, the 217-residue chain is Transcriptional regulatory protein CutR (217 aa).

One can recognise a Response regulatory domain in the interval 2-116 (RVLVVEDEQL…ELIARVRALG (115 aa)). A 4-aspartylphosphate modification is found at Asp51. Residues 124 to 217 (PPVLERAGIK…VTVPGSGYRI (94 aa)) constitute a DNA-binding region (ompR/PhoB-type).

Functionally, member of the two-component regulatory system CutS/CutR, involved in the regulation of copper metabolism. CutR suppresses a defective melC1 gene, encoding a putative copper-transfer gene, probably by altering copper metabolism. This Streptomyces lividans protein is Transcriptional regulatory protein CutR (cutR).